The following is a 537-amino-acid chain: Ribonuclease III domain-containing protein RNC1, chloroplastic (537 aa).

The N-terminal 51 residues, 1 to 51 (MELCSSSPSSSLLRICSSSAPEISFSSSISQFPSKTQSILTKSRFQNLRIC), are a transit peptide targeting the chloroplast. 2 RNase III domains span residues 141–283 (LLEV…LCFG) and 415–515 (EHPR…TIYG).

As to quaternary structure, interacts with RNA. Part of large ribonucleo-protein particles that contain CAF1 and/or CAF2.

The protein resides in the plastid. Its subcellular location is the chloroplast. Binds specific group II introns in chloroplasts and facilitates their splicing. Acts on both subgroup IIA and subgroup IIB introns. The substrates of the subgroup II also require the CRM domain proteins CAF1 or CAF2. Binds both single-stranded and double-stranded RNA non-specifically, but lacks endonuclease activity. Required for plastid ribosome biogenesis. This Arabidopsis thaliana (Mouse-ear cress) protein is Ribonuclease III domain-containing protein RNC1, chloroplastic.